Consider the following 203-residue polypeptide: Urease accessory protein UreG (203 aa).

10 to 17 (GPVGAGKT) is a GTP binding site.

Belongs to the SIMIBI class G3E GTPase family. UreG subfamily. As to quaternary structure, homodimer. UreD, UreF and UreG form a complex that acts as a GTP-hydrolysis-dependent molecular chaperone, activating the urease apoprotein by helping to assemble the nickel containing metallocenter of UreC. The UreE protein probably delivers the nickel.

It is found in the cytoplasm. In terms of biological role, facilitates the functional incorporation of the urease nickel metallocenter. This process requires GTP hydrolysis, probably effectuated by UreG. The protein is Urease accessory protein UreG of Micrococcus luteus (strain ATCC 4698 / DSM 20030 / JCM 1464 / CCM 169 / CCUG 5858 / IAM 1056 / NBRC 3333 / NCIMB 9278 / NCTC 2665 / VKM Ac-2230) (Micrococcus lysodeikticus).